We begin with the raw amino-acid sequence, 204 residues long: Large ribosomal subunit protein bL25 (204 aa).

A disordered region spans residues 1 to 20 (MSETYELKAETRDRVGKGSS).

Belongs to the bacterial ribosomal protein bL25 family. CTC subfamily. Part of the 50S ribosomal subunit; part of the 5S rRNA/L5/L18/L25 subcomplex. Contacts the 5S rRNA. Binds to the 5S rRNA independently of L5 and L18.

Its function is as follows. This is one of the proteins that binds to the 5S RNA in the ribosome where it forms part of the central protuberance. The sequence is that of Large ribosomal subunit protein bL25 from Rhizobium meliloti (strain 1021) (Ensifer meliloti).